Here is a 316-residue protein sequence, read N- to C-terminus: Aspartate carbamoyltransferase catalytic subunit (316 aa).

Positions 66 and 67 each coordinate carbamoyl phosphate. An L-aspartate-binding site is contributed by K94. Residues R116, H146, and Q149 each contribute to the carbamoyl phosphate site. L-aspartate contacts are provided by R179 and R234. Carbamoyl phosphate is bound by residues G275 and P276.

This sequence belongs to the aspartate/ornithine carbamoyltransferase superfamily. ATCase family. In terms of assembly, heterododecamer (2C3:3R2) of six catalytic PyrB chains organized as two trimers (C3), and six regulatory PyrI chains organized as three dimers (R2).

It catalyses the reaction carbamoyl phosphate + L-aspartate = N-carbamoyl-L-aspartate + phosphate + H(+). It functions in the pathway pyrimidine metabolism; UMP biosynthesis via de novo pathway; (S)-dihydroorotate from bicarbonate: step 2/3. Functionally, catalyzes the condensation of carbamoyl phosphate and aspartate to form carbamoyl aspartate and inorganic phosphate, the committed step in the de novo pyrimidine nucleotide biosynthesis pathway. The polypeptide is Aspartate carbamoyltransferase catalytic subunit (Nitrosomonas europaea (strain ATCC 19718 / CIP 103999 / KCTC 2705 / NBRC 14298)).